We begin with the raw amino-acid sequence, 161 residues long: Nucleotide-binding protein Shew_2893 (161 aa).

This sequence belongs to the YajQ family.

Functionally, nucleotide-binding protein. The sequence is that of Nucleotide-binding protein Shew_2893 from Shewanella loihica (strain ATCC BAA-1088 / PV-4).